The sequence spans 576 residues: Arginine--tRNA ligase (576 aa).

The short motif at A126–H136 is the 'HIGH' region element.

This sequence belongs to the class-I aminoacyl-tRNA synthetase family. As to quaternary structure, monomer.

It is found in the cytoplasm. It carries out the reaction tRNA(Arg) + L-arginine + ATP = L-arginyl-tRNA(Arg) + AMP + diphosphate. The chain is Arginine--tRNA ligase from Rickettsia bellii (strain OSU 85-389).